The sequence spans 122 residues: S-protein homolog 23 (122 aa).

Residues 1-20 form the signal peptide; it reads MQNLSILLVCSFCILGHVSS. Asn86 is a glycosylation site (N-linked (GlcNAc...) asparagine).

It belongs to the plant self-incompatibility (S1) protein family.

The protein resides in the secreted. In Arabidopsis thaliana (Mouse-ear cress), this protein is S-protein homolog 23.